Here is a 235-residue protein sequence, read N- to C-terminus: Ribonuclease 3 (235 aa).

Residues 7 to 135 enclose the RNase III domain; it reads FAALEARLGH…VVAAVYLDGG (129 aa). Glutamate 48 contributes to the Mg(2+) binding site. Aspartate 52 is a catalytic residue. 2 residues coordinate Mg(2+): aspartate 121 and glutamate 124. The active site involves glutamate 124. The region spanning 160 to 229 is the DRBM domain; it reads DPKTVLQEWA…ASAFLAREGV (70 aa).

Belongs to the ribonuclease III family. In terms of assembly, homodimer. Requires Mg(2+) as cofactor.

The protein resides in the cytoplasm. It carries out the reaction Endonucleolytic cleavage to 5'-phosphomonoester.. Digests double-stranded RNA. Involved in the processing of primary rRNA transcript to yield the immediate precursors to the large and small rRNAs (23S and 16S). Processes some mRNAs, and tRNAs when they are encoded in the rRNA operon. Processes pre-crRNA and tracrRNA of type II CRISPR loci if present in the organism. The protein is Ribonuclease 3 of Azorhizobium caulinodans (strain ATCC 43989 / DSM 5975 / JCM 20966 / LMG 6465 / NBRC 14845 / NCIMB 13405 / ORS 571).